The primary structure comprises 237 residues: Ribonuclease PH (237 aa).

Phosphate is bound by residues arginine 86 and glycine 124–arginine 126.

The protein belongs to the RNase PH family. As to quaternary structure, homohexameric ring arranged as a trimer of dimers.

The enzyme catalyses tRNA(n+1) + phosphate = tRNA(n) + a ribonucleoside 5'-diphosphate. Functionally, phosphorolytic 3'-5' exoribonuclease that plays an important role in tRNA 3'-end maturation. Removes nucleotide residues following the 3'-CCA terminus of tRNAs; can also add nucleotides to the ends of RNA molecules by using nucleoside diphosphates as substrates, but this may not be physiologically important. Probably plays a role in initiation of 16S rRNA degradation (leading to ribosome degradation) during starvation. This is Ribonuclease PH from Shewanella frigidimarina (strain NCIMB 400).